Here is a 562-residue protein sequence, read N- to C-terminus: Formate--tetrahydrofolate ligase (562 aa).

77–84 (TPAGEGKS) serves as a coordination point for ATP.

The protein belongs to the formate--tetrahydrofolate ligase family.

It catalyses the reaction (6S)-5,6,7,8-tetrahydrofolate + formate + ATP = (6R)-10-formyltetrahydrofolate + ADP + phosphate. It functions in the pathway one-carbon metabolism; tetrahydrofolate interconversion. In Corynebacterium jeikeium (strain K411), this protein is Formate--tetrahydrofolate ligase.